A 468-amino-acid polypeptide reads, in one-letter code: Acetyl-CoA decarbonylase/synthase complex subunit gamma (468 aa).

The 4Fe-4S domain maps to 1–60; sequence MKINSPLEAYKYLPQTNCGECGEATCMAFASKLIDRSGKTSDCPPLIKEKKFAKKLAELD. Residues C18, C21, C26, and C43 each coordinate [4Fe-4S] cluster.

In terms of assembly, heterodimer of delta and gamma chains. The ACDS complex is made up of alpha, epsilon, beta, gamma and delta chains with a probable stoichiometry of (alpha(2)epsilon(2))(4)-beta(8)-(gamma(1)delta(1))(8). Corrinoid serves as cofactor. The cofactor is [4Fe-4S] cluster.

It carries out the reaction 5,6,7,8-tetrahydrosarcinapterin + methyl-Co(III)-[corrinoid Fe-S protein] = 5-methyltetrahydrosarcinapterin + Co(I)-[corrinoid Fe-S protein] + H(+). It participates in one-carbon metabolism; methanogenesis from acetate. Functionally, part of a complex that catalyzes the reversible cleavage of acetyl-CoA, allowing growth on acetate as sole source of carbon and energy. The protein is Acetyl-CoA decarbonylase/synthase complex subunit gamma of Methanosarcina acetivorans (strain ATCC 35395 / DSM 2834 / JCM 12185 / C2A).